The chain runs to 434 residues: Citrate synthase (434 aa).

Active-site residues include histidine 310 and aspartate 368.

The protein belongs to the citrate synthase family.

It catalyses the reaction oxaloacetate + acetyl-CoA + H2O = citrate + CoA + H(+). The protein operates within carbohydrate metabolism; tricarboxylic acid cycle; isocitrate from oxaloacetate: step 1/2. In Bradyrhizobium diazoefficiens (strain JCM 10833 / BCRC 13528 / IAM 13628 / NBRC 14792 / USDA 110), this protein is Citrate synthase (gltA).